Reading from the N-terminus, the 96-residue chain is Xylulose kinase (96 aa).

71-72 (QH) lines the substrate pocket.

This sequence belongs to the FGGY kinase family.

It carries out the reaction D-xylulose + ATP = D-xylulose 5-phosphate + ADP + H(+). Catalyzes the phosphorylation of D-xylulose to D-xylulose 5-phosphate. The polypeptide is Xylulose kinase (Arthrobacter sp. (strain NRRL B3728)).